The chain runs to 219 residues: MLRTGAPNGDLPRAGEVHTGTTIMAVEFDGGVVVGSDSRVSAGEAVVNRVFDKLSPLHQHIYCALSGSAADAQAIADMAAYQLELHGMELEEPPLVLAAANVVRNITYKYREDLSAHLMVAGWDQREGGQVYGTMSGMLIRQPFAIGGSGSTYIYGYVDAAYKPGMSPEECRRFTTNAIALAMKRDGSSGGVIYLATITGAGVDHRVILGDELPRFYDE.

Residues 1 to 20 (MLRTGAPNGDLPRAGEVHTG) constitute a propeptide, removed in mature form. Residue threonine 21 is the Nucleophile of the active site. N6-acetyllysine occurs at positions 53 and 109.

This sequence belongs to the peptidase T1B family. In terms of assembly, the 26S proteasome consists of a 20S proteasome core and two 19S regulatory subunits. The 20S proteasome core is composed of 28 subunits that are arranged in four stacked rings, resulting in a barrel-shaped structure. The two end rings are each formed by seven alpha subunits, and the two central rings are each formed by seven beta subunits. The catalytic chamber with the active sites is on the inside of the barrel. Component of the immunoproteasome, where it displaces the equivalent housekeeping subunit PSMB6. Component of the spermatoproteasome, a form of the proteasome specifically found in testis. Post-translationally, autocleaved. The resulting N-terminal Thr residue of the mature subunit is responsible for the nucleophile proteolytic activity.

It localises to the cytoplasm. The protein resides in the nucleus. The enzyme catalyses Cleavage of peptide bonds with very broad specificity.. The proteasome is a multicatalytic proteinase complex which is characterized by its ability to cleave peptides with Arg, Phe, Tyr, Leu, and Glu adjacent to the leaving group at neutral or slightly basic pH. The proteasome has an ATP-dependent proteolytic activity. This subunit is involved in antigen processing to generate class I binding peptides. The polypeptide is Proteasome subunit beta type-9 (PSMB9) (Bos taurus (Bovine)).